Here is a 689-residue protein sequence, read N- to C-terminus: Protein asunder (689 aa).

A coiled-coil region spans residues 521–550; sequence NGARLKLSKAKDQYRLLYRELEQLIQLNAT. 2 disordered regions span residues 592–619 and 665–689; these read PERL…SKRR and GTKD…SVRS. Positions 599–614 are enriched in low complexity; the sequence is SSVGASGSSSSNSLLK. The short motif at 613 to 619 is the Nuclear localization signal (NLS) element; the sequence is LKASKRR.

The protein belongs to the Integrator subunit 13 family. As to quaternary structure, belongs to the multiprotein complex Integrator, at least composed of IntS1, IntS2, IntS3, IntS4, omd/IntS5, IntS6, defl/IntS7, IntS8, IntS9, IntS10, IntS11, IntS12, asun/IntS13, IntS14 and IntS15. The core complex associates with protein phosphatase 2A subunits mts/PP2A and Pp2A-29B, to form the Integrator-PP2A (INTAC) complex. In terms of processing, phosphorylated. Expressed in nurse cells at stages 9-10 of oogenesis and exported to the oocyte. Also expressed in the follicle cells surrounding the oocyte.

The protein resides in the nucleus. It localises to the cytoplasm. It is found in the perinuclear region. Component of the integrator complex, a multiprotein complex that terminates RNA polymerase II (Pol II) transcription in the promoter-proximal region of genes. The integrator complex provides a quality checkpoint during transcription elongation by driving premature transcription termination of transcripts that are unfavorably configured for transcriptional elongation: the complex terminates transcription by (1) catalyzing dephosphorylation of the C-terminal domain (CTD) of Pol II subunit Polr2A/Rbp1 and Spt5, and (2) degrading the exiting nascent RNA transcript via endonuclease activity. The integrator complex is also involved in the 3'-end processing of the U7 snRNA, and also the spliceosomal snRNAs U1, U2, U4 and U5. Plays a role as a regulator of spermatogenesis. Crucial regulator of the mitotic cell cycle and development. Required for the correct dynein-dynactin perinuclear localization important for nucleus-centrosome coupling that occur upon meiotic progression of primary spermatocytes. Plays a role in sperm motility and fertility. May have a role in the PNG/PLU/GNU pathway. This chain is Protein asunder, found in Drosophila melanogaster (Fruit fly).